The following is a 146-amino-acid chain: Large ribosomal subunit protein uL15 (146 aa).

Residues 1–18 (MKLHELKPSEGSRKERNR) are compositionally biased toward basic and acidic residues. Positions 1-50 (MKLHELKPSEGSRKERNRVGRGTGSGNGKTSGRGHKGQKARSGGGVRLGF) are disordered. Residues 21–31 (RGTGSGNGKTS) show a composition bias toward gly residues.

It belongs to the universal ribosomal protein uL15 family. Part of the 50S ribosomal subunit.

Binds to the 23S rRNA. The protein is Large ribosomal subunit protein uL15 of Listeria monocytogenes serotype 4b (strain CLIP80459).